The following is a 417-amino-acid chain: MLAFLILVTVTLASAHHSGEHFEGDKVFRVHVEDENHISLLHELASTRQMDFWKPDSVTQVKPHSTVDFRVKAEDTVAVEDFLGQNGLRYEVLISNLRSMLEAQFDSRVRTTGHSYEKYNNWETIEAWTEQVASENPDLISRSAIGTTFLGNTIYLLKVGKPGSNKPAVFMDCGFHAREWISPAFCQWFVREAVRTYGREIHMTEFLDKLDFYVLPVVNIDGYIYTWTTNRMWRKTRSTRAGSSCTGTDLNRNFDAGWCSIGASNNPCSETYCGSAAESEKESKAVADFIRNHLSSIKAYLTIHSYSQMMLYPYSYDYKLPKNNVELNTLAKGAVKKLASLHGTTYTYGPGASTIYPASGGSDDWAYDQGIKYSFTFELRDKGRYGFVLPESQIQPTCEETMLAIKYVTSYVLEHLY.

A signal peptide spans 1–16; it reads MLAFLILVTVTLASAH. Residues 17-110 constitute a propeptide, activation peptide; that stretch reads HSGEHFEGDK…LEAQFDSRVR (94 aa). One can recognise a Peptidase M14 domain in the interval 118 to 412; sequence KYNNWETIEA…LAIKYVTSYV (295 aa). Residues cysteine 173 and cysteine 186 are joined by a disulfide bond. The Zn(2+) site is built by histidine 176 and glutamate 179. Substrate is bound by residues 176-179, arginine 234, and 251-252; these read HARE and NR. Disulfide bonds link cysteine 245–cysteine 268 and cysteine 259–cysteine 273. Histidine 304 lines the Zn(2+) pocket. Residues 305–306 and tyrosine 356 each bind substrate; that span reads SY. The active-site Proton donor/acceptor is glutamate 378.

The protein belongs to the peptidase M14 family. Zn(2+) serves as cofactor.

It localises to the secreted. The protein resides in the zymogen granule lumen. It carries out the reaction Preferential release of a C-terminal lysine or arginine amino acid.. This Bos taurus (Bovine) protein is Carboxypeptidase B (CPB1).